Here is a 1710-residue protein sequence, read N- to C-terminus: Centrosomal protein of 152 kDa (1710 aa).

3 disordered regions span residues 1–27, 39–79, and 108–139; these read MSLD…YERE, HDML…NEQM, and NRSK…SKCE. Residues 1-60 form an interaction with PLK4 region; sequence MSLDFGSVALPVQNEDEEYDEEDYEREKELQQLLTDLPHDMLDDDLSSPELQYSDCSEDG. Acidic residues predominate over residues 14–24; it reads NEDEEYDEEDY. Over residues 108–123 the composition is skewed to basic and acidic residues; the sequence is NRSKTEDRHPVYHPEE. The stretch at 234–490 forms a coiled coil; it reads ENMQIIQLQV…ISLYESAAKL (257 aa). Over residues 587–604 the composition is skewed to basic and acidic residues; that stretch reads DEKSIEVETKTDTSEKPK. Positions 587-611 are disordered; that stretch reads DEKSIEVETKTDTSEKPKNQLWPES. Coiled-coil stretches lie at residues 615-664, 700-772, and 902-993; these read DVVR…QDFD, EKQQ…LEKE, and AVSE…INEV. Positions 1120–1142 are disordered; the sequence is ELSKDSASQGTGQGDPGPAAGHH. Positions 1170-1241 form a coiled coil; the sequence is HCFQELEKAK…LEELQTLCKT (72 aa). Thr1241 carries the phosphothreonine modification.

It belongs to the CEP152 family. In terms of assembly, interacts (via N-terminus) with PLK4; the interaction is mutally exclusive with a PLK4:CEP192 interaction. Interacts (via C-terminus) with CPAP (via-N-terminus). Interacts with CINP. Interacts with CDK5RAP2, WDR62, CEP63 and CEP131. CEP63, CDK5RAP2, CEP152, WDR62 are proposed to form a stepwise assembled complex at the centrosome forming a ring near parental centrioles. Interacts with DEUP1; this interaction recruits CEP152 to the deuterosome. The interactions with CEP63 and DEUP1 are mutually exclusive. Interacts with CCDC66.

Its subcellular location is the cytoplasm. The protein localises to the cytoskeleton. The protein resides in the microtubule organizing center. It is found in the centrosome. It localises to the centriole. Necessary for centrosome duplication; the function also seems to involve CEP63, CDK5RAP2 and WDR62 through a stepwise assembled complex at the centrosome that recruits CDK2 required for centriole duplication. Acts as a molecular scaffold facilitating the interaction of PLK4 and CPAP, 2 molecules involved in centriole formation. Proposed to snatch PLK4 away from PLK4:CEP92 complexes in early G1 daughter centriole and to reposition PLK4 at the outer boundary of a newly forming CEP152 ring structure. Also plays a key role in deuterosome-mediated centriole amplification in multiciliated that can generate more than 100 centrioles. Overexpression of CEP152 can drive amplification of centrioles. This chain is Centrosomal protein of 152 kDa, found in Homo sapiens (Human).